A 1252-amino-acid polypeptide reads, in one-letter code: Myosin-1 (1252 aa).

The disordered stretch occupies residues 1-27; it reads MAPSKKAGKKVTPASKKSAGQGKVAKA. Residues 38–712 enclose the Myosin motor domain; sequence VGVSDMTLLT…TLFALETMRD (675 aa). 128–135 serves as a coordination point for ATP; the sequence is GESGAGKT. Ser-356 carries the post-translational modification Phosphoserine. An actin-binding region spans residues 403–485; the sequence is IIGILDIFGF…PGIFAALNDA (83 aa). IQ domains follow at residues 716–736 and 737–762; these read HNMAARIQRAFRNYMRYKHEC and ARRIQRFWKNNKEGIAYAQTRDYGHQ. In terms of domain architecture, TH1 spans 770-953; sequence RRRFSLLSYR…TVHVASGEPP (184 aa). Disordered regions lie at residues 945-1049 and 1103-1228; these read VHVA…PETP and PPKA…PATA. 2 stretches are compositionally biased toward pro residues: residues 989–999 and 1028–1046; these read RSVPKPKPVAQ and RPPPAPPRNIAPPPPPAKP. An SH3 domain is found at 1046 to 1104; that stretch reads PETPMYRAKFAFEGQEGEMSLKKDDVVELVEKDDNGWWLVKMDGVEGWAPNNYLELVPP. Polar residues predominate over residues 1162 to 1175; sequence ADTTPASSRPSSAI. Pro residues predominate over residues 1178–1193; the sequence is KPPPPVAAKPKPPVIP. The span at 1194-1203 shows a compositional bias: low complexity; it reads VKPSVSAKGP. Positions 1204–1215 are enriched in pro residues; the sequence is AKPPIPTAPRPP. Low complexity predominate over residues 1216 to 1228; sequence AASTSRSSKPATA.

It belongs to the TRAFAC class myosin-kinesin ATPase superfamily. Myosin family. Phosphorylation of the TEDS site (Ser-356) is required for the polarization of the actin cytoskeleton. Phosphorylation probably activates the myosin-I ATPase activity.

The protein localises to the cytoplasm. It is found in the cytoskeleton. It localises to the actin patch. Type-I myosin implicated in the organization of the actin cytoskeleton. Required for proper actin cytoskeleton polarization. At the cell cortex, assembles in patch-like structures together with proteins from the actin-polymerizing machinery and promotes actin assembly. Functions as actin nucleation-promoting factor (NPF) for the Arp2/3 complex. This is Myosin-1 (MYO1) from Laccaria bicolor (strain S238N-H82 / ATCC MYA-4686) (Bicoloured deceiver).